The following is a 303-amino-acid chain: Kanosamine kinase (303 aa).

The protein belongs to the ROK (NagC/XylR) family.

The catalysed reaction is kanosamine + ATP = D-kanosamine 6-phosphate + ADP + H(+). The protein operates within antibiotic biosynthesis; rifamycin B biosynthesis. Its activity is regulated as follows. Inhibited by Zn(2+), Cu(2+), and Fe(2+). Its function is as follows. Involved in the biosynthesis of 3-amino-5-hydroxybenzoate (AHBA), a compound that then serves as the starter unit for the assembly of a polyketide during the biosynthesis of rifamycin B and other ansamycin antibiotics. Catalyzes only the phosphorylation of kanosamine to yield kanosamine 6-phosphate. This chain is Kanosamine kinase (rifN), found in Amycolatopsis mediterranei (strain S699) (Nocardia mediterranei).